The following is a 401-amino-acid chain: Exodeoxyribonuclease 7 large subunit (401 aa).

It belongs to the XseA family. As to quaternary structure, heterooligomer composed of large and small subunits.

Its subcellular location is the cytoplasm. It catalyses the reaction Exonucleolytic cleavage in either 5'- to 3'- or 3'- to 5'-direction to yield nucleoside 5'-phosphates.. Functionally, bidirectionally degrades single-stranded DNA into large acid-insoluble oligonucleotides, which are then degraded further into small acid-soluble oligonucleotides. This Thermoanaerobacter sp. (strain X514) protein is Exodeoxyribonuclease 7 large subunit.